Consider the following 258-residue polypeptide: Acetylglutamate kinase (258 aa).

Substrate contacts are provided by residues 44-45 (GG), arginine 66, and asparagine 158. ATP-binding positions include 181 to 186 (DVSGIL) and 209 to 211 (IIT).

It belongs to the acetylglutamate kinase family. ArgB subfamily. In terms of assembly, homodimer.

The protein localises to the cytoplasm. The enzyme catalyses N-acetyl-L-glutamate + ATP = N-acetyl-L-glutamyl 5-phosphate + ADP. It participates in amino-acid biosynthesis; L-arginine biosynthesis; N(2)-acetyl-L-ornithine from L-glutamate: step 2/4. Its function is as follows. Catalyzes the ATP-dependent phosphorylation of N-acetyl-L-glutamate. This chain is Acetylglutamate kinase, found in Salmonella arizonae (strain ATCC BAA-731 / CDC346-86 / RSK2980).